The sequence spans 639 residues: Probable potassium transport system protein Kup 1 (639 aa).

Polar residues predominate over residues 1–16 (MALANTGSEAEPVEQS). The disordered stretch occupies residues 1–21 (MALANTGSEAEPVEQSSHPEI). 12 helical membrane passes run 29–49 (LMLG…IYAF), 67–87 (ILGV…IKYI), 117–137 (AVIL…AVIT), 154–174 (PTFQ…VFAV), 182–202 (VGLV…LSGL), 220–240 (IVAF…AIFL), 260–280 (IVLA…AGQG), 302–322 (ALIP…QAVI), 354–374 (IYMP…VVGF), 383–403 (AYGI…YVVM), 411–431 (LWVA…FFAS), and 436–456 (VFEG…GMWT).

It belongs to the HAK/KUP transporter (TC 2.A.72) family.

Its subcellular location is the cell inner membrane. It catalyses the reaction K(+)(in) + H(+)(in) = K(+)(out) + H(+)(out). In terms of biological role, transport of potassium into the cell. Likely operates as a K(+):H(+) symporter. The chain is Probable potassium transport system protein Kup 1 from Mesorhizobium japonicum (strain LMG 29417 / CECT 9101 / MAFF 303099) (Mesorhizobium loti (strain MAFF 303099)).